Consider the following 879-residue polypeptide: Alanine--tRNA ligase (879 aa).

Zn(2+) contacts are provided by histidine 570, histidine 574, cysteine 672, and histidine 676.

It belongs to the class-II aminoacyl-tRNA synthetase family. Zn(2+) serves as cofactor.

It localises to the cytoplasm. It catalyses the reaction tRNA(Ala) + L-alanine + ATP = L-alanyl-tRNA(Ala) + AMP + diphosphate. In terms of biological role, catalyzes the attachment of alanine to tRNA(Ala) in a two-step reaction: alanine is first activated by ATP to form Ala-AMP and then transferred to the acceptor end of tRNA(Ala). Also edits incorrectly charged Ser-tRNA(Ala) and Gly-tRNA(Ala) via its editing domain. The protein is Alanine--tRNA ligase of Nitratidesulfovibrio vulgaris (strain ATCC 29579 / DSM 644 / CCUG 34227 / NCIMB 8303 / VKM B-1760 / Hildenborough) (Desulfovibrio vulgaris).